The chain runs to 499 residues: Putative protein phosphatase 2C 76 (499 aa).

The N-terminal stretch at 1–34 (MRLGCSGRRRRLLRAALLRLVVLVLVAPPRRCAG) is a signal peptide. The tract at residues 67–101 (AGSGGEGDGDRRSSSSSPPPPPHPRGCHVAVDRGR) is disordered. Residues 92–457 (GCHVAVDRGR…DNVAAVIVPL (366 aa)) form the PPM-type phosphatase domain. Positions 138 and 139 each coordinate Mn(2+). The interval 286–306 (KKTSVVSGKRRRKRNSNNRDD) is disordered. Mn(2+)-binding residues include aspartate 397 and aspartate 448.

The protein belongs to the PP2C family. Mg(2+) serves as cofactor. It depends on Mn(2+) as a cofactor.

The catalysed reaction is O-phospho-L-seryl-[protein] + H2O = L-seryl-[protein] + phosphate. It catalyses the reaction O-phospho-L-threonyl-[protein] + H2O = L-threonyl-[protein] + phosphate. This is Putative protein phosphatase 2C 76 from Oryza sativa subsp. japonica (Rice).